The chain runs to 252 residues: Phosphoglycolate phosphatase (252 aa).

Catalysis depends on Asp-13, which acts as the Nucleophile. Asp-13, Asp-15, and Asp-192 together coordinate Mg(2+).

This sequence belongs to the HAD-like hydrolase superfamily. CbbY/CbbZ/Gph/YieH family. Monomer. Mg(2+) serves as cofactor. Requires chloride as cofactor.

The catalysed reaction is 2-phosphoglycolate + H2O = glycolate + phosphate. It functions in the pathway organic acid metabolism; glycolate biosynthesis; glycolate from 2-phosphoglycolate: step 1/1. In terms of biological role, specifically catalyzes the dephosphorylation of 2-phosphoglycolate. Is involved in the dissimilation of the intracellular 2-phosphoglycolate formed during the DNA repair of 3'-phosphoglycolate ends, a major class of DNA lesions induced by oxidative stress. In Salmonella choleraesuis (strain SC-B67), this protein is Phosphoglycolate phosphatase.